The sequence spans 234 residues: Exotoxin type G (234 aa).

The signal sequence occupies residues 1–24 (MKTNILTIIILSCVFSYGSQLAYA).

This sequence belongs to the staphylococcal/streptococcal toxin family.

Mitogenic for human peripheral blood lymphocytes. This Streptococcus pyogenes serotype M3 (strain ATCC BAA-595 / MGAS315) protein is Exotoxin type G (speG).